A 1349-amino-acid chain; its full sequence is DNA-directed RNA polymerase subunit beta' (1349 aa).

Cys70, Cys72, Cys85, and Cys88 together coordinate Zn(2+). The Mg(2+) site is built by Asp460, Asp462, and Asp464. Cys801, Cys875, Cys882, and Cys885 together coordinate Zn(2+).

Belongs to the RNA polymerase beta' chain family. In terms of assembly, the RNAP catalytic core consists of 2 alpha, 1 beta, 1 beta' and 1 omega subunit. When a sigma factor is associated with the core the holoenzyme is formed, which can initiate transcription. Mg(2+) is required as a cofactor. Requires Zn(2+) as cofactor.

It catalyses the reaction RNA(n) + a ribonucleoside 5'-triphosphate = RNA(n+1) + diphosphate. Functionally, DNA-dependent RNA polymerase catalyzes the transcription of DNA into RNA using the four ribonucleoside triphosphates as substrates. The chain is DNA-directed RNA polymerase subunit beta' from Desulfotalea psychrophila (strain LSv54 / DSM 12343).